Reading from the N-terminus, the 513-residue chain is MQLNSTEIAELIKNRIEQFNVVSEARNEGTIVSVTDGIIRINGLADVMQGEMIELPGSRFAIALNLDRDSVGAVVMGPYADLAEGQKVKGTGRILEVPVGRGLLGRVVNTLGEPIDGKGPIENDGFSPVEVIAPGVIDRKSVDEPVQTGIKSIDAMIPIGRGQRELIIGDRQIGKSAIALDAIINQKNTGIKSIYVAIGQKASTVANVVRSLEEHGALSNTIVVVASASEAAALQYLAPYAGCSMGEYFRDRGEDALIVYDDLSKQAVAYRQISLLLRRPPGREAYPGDVFYLHSRLLERAARVNEAYVEKFTNGEVKGKTGSLTALPIIETQAGDVSAFVPTNVISITDGQIFLQSDLFNSGIRPAVNAGISVSRVGGAAQTKIIKKLGGGIRLALAQYAELAAFAQFASDLDDATRAQLEHGQRVTELMKQKQYSPLSIAETAVSLFAAEKGFLNDVAINKVVDFEEALHAYMSNEQAALMATINEKGDYNKDIEASLKTALENFKSTQTW.

169–176 lines the ATP pocket; that stretch reads GDRQIGKS.

This sequence belongs to the ATPase alpha/beta chains family. In terms of assembly, F-type ATPases have 2 components, CF(1) - the catalytic core - and CF(0) - the membrane proton channel. CF(1) has five subunits: alpha(3), beta(3), gamma(1), delta(1), epsilon(1). CF(0) has three main subunits: a(1), b(2) and c(9-12). The alpha and beta chains form an alternating ring which encloses part of the gamma chain. CF(1) is attached to CF(0) by a central stalk formed by the gamma and epsilon chains, while a peripheral stalk is formed by the delta and b chains.

It is found in the cell inner membrane. It carries out the reaction ATP + H2O + 4 H(+)(in) = ADP + phosphate + 5 H(+)(out). Functionally, produces ATP from ADP in the presence of a proton gradient across the membrane. The alpha chain is a regulatory subunit. This chain is ATP synthase subunit alpha, found in Colwellia psychrerythraea (strain 34H / ATCC BAA-681) (Vibrio psychroerythus).